A 169-amino-acid chain; its full sequence is Disulfide bond formation protein B 1 (169 aa).

Residues 1–14 lie on the Cytoplasmic side of the membrane; that stretch reads MSDNTLYLRREKRF. A helical transmembrane segment spans residues 15-31; that stretch reads LVLLGIICLALIGGALY. At 32–49 the chain is on the periplasmic side; it reads MQVVLDEAPCPLCILQRY. Cysteines 41 and 44 form a disulfide. Residues 50 to 65 traverse the membrane as a helical segment; the sequence is ALLFIAIFAFIGAAMP. Over 66–72 the chain is Cytoplasmic; sequence GRRSVTA. Residues 73–89 traverse the membrane as a helical segment; sequence FETLVTLSALGGIAAAG. Residues 90-144 are Periplasmic-facing; the sequence is RHVWILAHPSDSCGIDVLQPIVDGLPLATLFPTGFQVSGFCTTPYPPVLGLSLAQ. An intrachain disulfide couples Cys-102 to Cys-130. Residues 145–163 form a helical membrane-spanning segment; the sequence is WALTAFVLTAVLVPACIIR. Over 164–169 the chain is Cytoplasmic; the sequence is NRRKPY.

Belongs to the DsbB family.

Its subcellular location is the cell inner membrane. Its function is as follows. Required for disulfide bond formation in some periplasmic proteins. Acts by oxidizing the DsbA protein. This chain is Disulfide bond formation protein B 1, found in Pseudomonas syringae pv. syringae (strain B728a).